We begin with the raw amino-acid sequence, 432 residues long: Ornithine aminotransferase, mitochondrial (432 aa).

N6-(pyridoxal phosphate)lysine is present on K287.

This sequence belongs to the class-III pyridoxal-phosphate-dependent aminotransferase family. As to quaternary structure, homotetramer. Pyridoxal 5'-phosphate serves as cofactor.

The protein localises to the mitochondrion matrix. The catalysed reaction is a 2-oxocarboxylate + L-ornithine = L-glutamate 5-semialdehyde + an L-alpha-amino acid. The protein operates within amino-acid biosynthesis; L-proline biosynthesis; L-glutamate 5-semialdehyde from L-ornithine: step 1/1. The protein is Ornithine aminotransferase, mitochondrial (Oat) of Drosophila ananassae (Fruit fly).